The sequence spans 407 residues: MQKTSNTLALGSLTALFFLMGFITVLNDILIPHLKPIFDLTYFEASLIQFCFFGAYFIMGGVFGNVISKIGYPFGVVLGFVITASGCALFYPAAHFGSYGFFLGALFILASGIVCLQTAGNPFVTLLSKGKEARNLVLVQAFNSLGTTLGPIFGSLLIFSATKTSDNLSLIDKLADAKSVQMPYLGLAVFSLLLALVMYLLKLPDVEKEMPKETTQKSLFSHKHFVFGALGIFFYVGGEVAIGSFLVLSFEKLLNLDAQSSAHYLVYYWGGAMVGRFLGSALMNKIAPNKYLAFNALSSIILIALAILIGGKIALFALTFVGFFNSIMFPTIFSLATLNLGHLTSKASGVISMAIVGGALIPPIQGVVTDMLTATESNLLYAYSVPLLCYFYILFFALKGYKQEENS.

Helical transmembrane passes span 11-31 (GSLTALFFLMGFITVLNDILI), 47-67 (LIQFCFFGAYFIMGGVFGNVI), 70-90 (IGYPFGVVLGFVITASGCALF), 96-116 (FGSYGFFLGALFILASGIVCL), 139-159 (VQAFNSLGTTLGPIFGSLLIF), 180-200 (VQMPYLGLAVFSLLLALVMYL), 225-245 (FVFGALGIFFYVGGEVAIGSF), 263-283 (HYLVYYWGGAMVGRFLGSALM), 300-320 (IILIALAILIGGKIALFALTF), 321-341 (VGFFNSIMFPTIFSLATLNLG), 349-369 (GVISMAIVGGALIPPIQGVVT), and 378-398 (NLLYAYSVPLLCYFYILFFAL).

The protein belongs to the major facilitator superfamily. FHS transporter (TC 2.A.1.7) family.

The protein localises to the cell inner membrane. Intake of glucose and galactose. The sequence is that of Putative glucose/galactose transporter (gluP) from Helicobacter pylori (strain J99 / ATCC 700824) (Campylobacter pylori J99).